The sequence spans 43 residues: DRDSCVDKSKCGKYGYYHQCDECCKKAGDRAGNCVYYKCKCNP.

4 disulfides stabilise this stretch: cysteine 5-cysteine 23, cysteine 11-cysteine 34, cysteine 20-cysteine 39, and cysteine 24-cysteine 41.

It belongs to the ergtoxin family. Gamma-KTx 4 subfamily. As to expression, expressed by the venom gland.

It is found in the secreted. Its function is as follows. Reversibly blocks Kv11/ERG potassium channels. In Centruroides elegans (Bark scorpion), this protein is Potassium channel toxin gamma-KTx 4.8.